Here is a 101-residue protein sequence, read N- to C-terminus: Large ribosomal subunit protein uL24 (101 aa).

The protein belongs to the universal ribosomal protein uL24 family. Part of the 50S ribosomal subunit.

Functionally, one of two assembly initiator proteins, it binds directly to the 5'-end of the 23S rRNA, where it nucleates assembly of the 50S subunit. Its function is as follows. One of the proteins that surrounds the polypeptide exit tunnel on the outside of the subunit. The sequence is that of Large ribosomal subunit protein uL24 from Lactococcus lactis subsp. lactis (strain IL1403) (Streptococcus lactis).